The primary structure comprises 324 residues: uncharacterized protein (324 aa).

This is an uncharacterized protein from Dryophytes versicolor (chameleon treefrog).